A 141-amino-acid chain; its full sequence is MTVERTFSIIKPNAVANNDIGAIYARFERAGFKIIASKMLRLTREQAEGFYAEHKGRPFFDGLVEFMTSGPIVVQVLEAENAVQRNRDIMGATNPDNALAGTLRADYADSFTANAVHGSDAVESAQREIAYFFNESEICSR.

ATP contacts are provided by lysine 11, phenylalanine 59, arginine 87, threonine 93, arginine 104, and asparagine 114. Residue histidine 117 is the Pros-phosphohistidine intermediate of the active site.

The protein belongs to the NDK family. In terms of assembly, homotetramer. The cofactor is Mg(2+).

It localises to the cytoplasm. The catalysed reaction is a 2'-deoxyribonucleoside 5'-diphosphate + ATP = a 2'-deoxyribonucleoside 5'-triphosphate + ADP. It carries out the reaction a ribonucleoside 5'-diphosphate + ATP = a ribonucleoside 5'-triphosphate + ADP. Its function is as follows. Major role in the synthesis of nucleoside triphosphates other than ATP. The ATP gamma phosphate is transferred to the NDP beta phosphate via a ping-pong mechanism, using a phosphorylated active-site intermediate. This chain is Nucleoside diphosphate kinase, found in Serratia proteamaculans (strain 568).